A 512-amino-acid polypeptide reads, in one-letter code: 2,3-bisphosphoglycerate-independent phosphoglycerate mutase (512 aa).

Mn(2+) contacts are provided by D12 and S62. Residue S62 is the Phosphoserine intermediate of the active site. Residues H123, 153–154, R185, R191, 260–263, and K333 each bind substrate; these read RD and RPDR. 5 residues coordinate Mn(2+): D400, H404, D441, H442, and H460.

Belongs to the BPG-independent phosphoglycerate mutase family. As to quaternary structure, monomer. Mn(2+) serves as cofactor.

It catalyses the reaction (2R)-2-phosphoglycerate = (2R)-3-phosphoglycerate. Its pathway is carbohydrate degradation; glycolysis; pyruvate from D-glyceraldehyde 3-phosphate: step 3/5. Functionally, catalyzes the interconversion of 2-phosphoglycerate and 3-phosphoglycerate. This is 2,3-bisphosphoglycerate-independent phosphoglycerate mutase from Clostridium perfringens (strain 13 / Type A).